The sequence spans 1331 residues: Alpha,alpha-trehalose-phosphate synthase [UDP-forming] 1 (1331 aa).

Residues methionine 1 to asparagine 13 show a composition bias toward polar residues. Disordered regions lie at residues methionine 1–proline 50, threonine 71–leucine 118, and proline 1312–asparagine 1331. The span at aspartate 39–proline 50 shows a compositional bias: basic and acidic residues. The span at leucine 77–glycine 98 shows a compositional bias: acidic residues. Positions asparagine 102–aspartate 112 are enriched in basic and acidic residues. Positions serine 1318–asparagine 1331 are enriched in polar residues.

In the N-terminal section; belongs to the glycosyltransferase 20 family. This sequence in the C-terminal section; belongs to the gob-1 trehalose phosphatase family.

The enzyme catalyses D-glucose 6-phosphate + UDP-alpha-D-glucose = alpha,alpha-trehalose 6-phosphate + UDP + H(+). Functionally, catalyzes the production of trehalose from glucose-6-phosphate and UDP-alpha-D-glucose in a 2 step process. The polypeptide is Alpha,alpha-trehalose-phosphate synthase [UDP-forming] 1 (tps-1) (Caenorhabditis elegans).